The following is a 122-amino-acid chain: Large ribosomal subunit protein uL14 (122 aa).

The protein belongs to the universal ribosomal protein uL14 family. In terms of assembly, part of the 50S ribosomal subunit. Forms a cluster with proteins L3 and L19. In the 70S ribosome, L14 and L19 interact and together make contacts with the 16S rRNA in bridges B5 and B8.

In terms of biological role, binds to 23S rRNA. Forms part of two intersubunit bridges in the 70S ribosome. This is Large ribosomal subunit protein uL14 from Albidiferax ferrireducens (strain ATCC BAA-621 / DSM 15236 / T118) (Rhodoferax ferrireducens).